Here is a 222-residue protein sequence, read N- to C-terminus: Small ribosomal subunit protein uS3 (222 aa).

In terms of domain architecture, KH type-2 spans 38–106 (IRKFISEKLA…NVHINIVEIK (69 aa)).

It belongs to the universal ribosomal protein uS3 family. In terms of assembly, part of the 30S ribosomal subunit. Forms a tight complex with proteins S10 and S14.

Its function is as follows. Binds the lower part of the 30S subunit head. Binds mRNA in the 70S ribosome, positioning it for translation. In Lactobacillus gasseri (strain ATCC 33323 / DSM 20243 / BCRC 14619 / CIP 102991 / JCM 1131 / KCTC 3163 / NCIMB 11718 / NCTC 13722 / AM63), this protein is Small ribosomal subunit protein uS3.